A 160-amino-acid chain; its full sequence is Anaerobic nitrite reductase Glb1-1 (160 aa).

A Globin domain is found at 8–157 (GFTEEQEALV…LVNAIKSEMK (150 aa)). The Homodimerization signature appears at 41–45 (EIAPS). Positions 51, 65, 69, 99, and 104 each coordinate heme b. A Homodimerization motif is present at residues 111–123 (DEHFEVTKFALLE).

Belongs to the plant globin family. In terms of assembly, homodimer. Heme b serves as cofactor.

The catalysed reaction is Fe(III)-heme b-[protein] + nitric oxide + H2O = Fe(II)-heme b-[protein] + nitrite + 2 H(+). Its function is as follows. Phytoglobin that reduces nitrite to nitric oxide (NO) under anoxic conditions (e.g. during flooding or in waterlogged soil) and upon root nodulation. Required for general plant development and during nodulation, especially for the onset of symbiosis. Monitors nitric oxide (NO) levels during early phase of the nitrogen-fixing symbiosis and buffers oxygen in functioning nodules. May not function as an oxygen storage or transport protein. Has an unusually high affinity for O(2) through a hexacoordinate heme iron because of a very low dissociation constant. The polypeptide is Anaerobic nitrite reductase Glb1-1 (Medicago truncatula (Barrel medic)).